We begin with the raw amino-acid sequence, 282 residues long: Acetylglutamate kinase (282 aa).

Residues 62–63 (GG), arginine 84, and asparagine 178 contribute to the substrate site.

The protein belongs to the acetylglutamate kinase family. ArgB subfamily.

The protein resides in the cytoplasm. The enzyme catalyses N-acetyl-L-glutamate + ATP = N-acetyl-L-glutamyl 5-phosphate + ADP. The protein operates within amino-acid biosynthesis; L-arginine biosynthesis; N(2)-acetyl-L-ornithine from L-glutamate: step 2/4. Functionally, catalyzes the ATP-dependent phosphorylation of N-acetyl-L-glutamate. The sequence is that of Acetylglutamate kinase from Thermotoga sp. (strain RQ2).